The following is a 306-amino-acid chain: Elongation factor Ts (306 aa).

Positions 81–84 (TDFV) are involved in Mg(2+) ion dislocation from EF-Tu.

It belongs to the EF-Ts family.

It is found in the cytoplasm. In terms of biological role, associates with the EF-Tu.GDP complex and induces the exchange of GDP to GTP. It remains bound to the aminoacyl-tRNA.EF-Tu.GTP complex up to the GTP hydrolysis stage on the ribosome. In Polaromonas naphthalenivorans (strain CJ2), this protein is Elongation factor Ts.